The sequence spans 309 residues: 4-diphosphocytidyl-2-C-methyl-D-erythritol kinase (309 aa).

Residue Lys-28 is part of the active site. 120-130 (PSQAGMGGGSS) is an ATP binding site. Asp-162 is an active-site residue.

This sequence belongs to the GHMP kinase family. IspE subfamily.

It carries out the reaction 4-CDP-2-C-methyl-D-erythritol + ATP = 4-CDP-2-C-methyl-D-erythritol 2-phosphate + ADP + H(+). The protein operates within isoprenoid biosynthesis; isopentenyl diphosphate biosynthesis via DXP pathway; isopentenyl diphosphate from 1-deoxy-D-xylulose 5-phosphate: step 3/6. Its function is as follows. Catalyzes the phosphorylation of the position 2 hydroxy group of 4-diphosphocytidyl-2C-methyl-D-erythritol. This Polaromonas sp. (strain JS666 / ATCC BAA-500) protein is 4-diphosphocytidyl-2-C-methyl-D-erythritol kinase.